Here is a 252-residue protein sequence, read N- to C-terminus: MKTVTVRDLVVGEGAPKIIVSLMGKTITDVKSEALAYREADFDILEWRVDHFANVTTAESVLEAAGAIREIITDKPLLFTFRSAKEGGEQALTTGQYIDLNRAAVDSGLVDMIDLELFTGDDEVKATVGYAHQHNVAVIMSNHDFHKTPAAEEIVQRLRKMQELGADIPKIAVMPQTKADVLTLLTATVEMQERYADRPIITMSMSKTGVISRLAGEVFGSAATFGAVKKASAPGQISVADLRTVLTILHQA.

3-dehydroquinate is bound by residues Ser-21, 46–48 (EWR), and Arg-82. The Proton donor/acceptor role is filled by His-143. The Schiff-base intermediate with substrate role is filled by Lys-170. Arg-213, Ser-232, and Gln-236 together coordinate 3-dehydroquinate.

Belongs to the type-I 3-dehydroquinase family. As to quaternary structure, homodimer.

It catalyses the reaction 3-dehydroquinate = 3-dehydroshikimate + H2O. It participates in metabolic intermediate biosynthesis; chorismate biosynthesis; chorismate from D-erythrose 4-phosphate and phosphoenolpyruvate: step 3/7. Its activity is regulated as follows. Inhibited by (2R)-2-methyl-3-dehydroquinic acid. In terms of biological role, involved in the third step of the chorismate pathway, which leads to the biosynthesis of aromatic amino acids. Catalyzes the cis-dehydration of 3-dehydroquinate (DHQ) and introduces the first double bond of the aromatic ring to yield 3-dehydroshikimate. The reaction involves the formation of an imine intermediate between the keto group of 3-dehydroquinate and the epsilon-amino group of a Lys-170 at the active site. The sequence is that of 3-dehydroquinate dehydratase from Salmonella typhimurium (strain LT2 / SGSC1412 / ATCC 700720).